The primary structure comprises 742 residues: Phosphoribosylformylglycinamidine synthase subunit PurL (742 aa).

H54 is a catalytic residue. ATP-binding residues include Y57 and K96. Position 98 (E98) interacts with Mg(2+). Substrate contacts are provided by residues 99–102 and R121; that span reads SHNH. The Proton acceptor role is filled by H100. A Mg(2+)-binding site is contributed by D122. A substrate-binding site is contributed by Q245. Position 273 (D273) interacts with Mg(2+). 317 to 319 contributes to the substrate binding site; the sequence is ESQ. ATP contacts are provided by D500 and G537. N538 provides a ligand contact to Mg(2+). S540 lines the substrate pocket.

This sequence belongs to the FGAMS family. In terms of assembly, monomer. Part of the FGAM synthase complex composed of 1 PurL, 1 PurQ and 2 PurS subunits.

The protein resides in the cytoplasm. The enzyme catalyses N(2)-formyl-N(1)-(5-phospho-beta-D-ribosyl)glycinamide + L-glutamine + ATP + H2O = 2-formamido-N(1)-(5-O-phospho-beta-D-ribosyl)acetamidine + L-glutamate + ADP + phosphate + H(+). The protein operates within purine metabolism; IMP biosynthesis via de novo pathway; 5-amino-1-(5-phospho-D-ribosyl)imidazole from N(2)-formyl-N(1)-(5-phospho-D-ribosyl)glycinamide: step 1/2. Its function is as follows. Part of the phosphoribosylformylglycinamidine synthase complex involved in the purines biosynthetic pathway. Catalyzes the ATP-dependent conversion of formylglycinamide ribonucleotide (FGAR) and glutamine to yield formylglycinamidine ribonucleotide (FGAM) and glutamate. The FGAM synthase complex is composed of three subunits. PurQ produces an ammonia molecule by converting glutamine to glutamate. PurL transfers the ammonia molecule to FGAR to form FGAM in an ATP-dependent manner. PurS interacts with PurQ and PurL and is thought to assist in the transfer of the ammonia molecule from PurQ to PurL. The sequence is that of Phosphoribosylformylglycinamidine synthase subunit PurL from Geobacillus sp. (strain WCH70).